The primary structure comprises 55 residues: Large ribosomal subunit protein bL33 (55 aa).

The protein belongs to the bacterial ribosomal protein bL33 family.

The chain is Large ribosomal subunit protein bL33 from Campylobacter fetus subsp. fetus (strain 82-40).